A 127-amino-acid chain; its full sequence is 3-aminoacrylate deaminase RutC (127 aa).

Belongs to the RutC family.

The enzyme catalyses (Z)-3-aminoacrylate + H2O + H(+) = 3-oxopropanoate + NH4(+). Its function is as follows. Involved in pyrimidine catabolism. Catalyzes the deamination of 3-aminoacrylate to malonic semialdehyde, a reaction that can also occur spontaneously. RutC may facilitate the reaction and modulate the metabolic fitness, rather than catalyzing essential functions. This chain is 3-aminoacrylate deaminase RutC, found in Pseudomonas savastanoi pv. phaseolicola (strain 1448A / Race 6) (Pseudomonas syringae pv. phaseolicola (strain 1448A / Race 6)).